Consider the following 474-residue polypeptide: Sporulation-specific protein 6 (474 aa).

One can recognise a BRCT domain in the interval 125–178; that stretch reads RLAFPNFIFYFDNVDEEIKRRVTQKINNLGAKVATLFTFEVTHFITTRTTDPEM. Residues 421–470 form a DBF4-type zinc finger; it reads IETKSGYCENCCERYKDLERHLGGKHHRRFAEKDENFQGLDDLFLLIRRP. C428, C431, H441, and H447 together coordinate Zn(2+).

The protein resides in the nucleus. In terms of biological role, may act as a kinase regulator. Essential for progression of meiosis II and sporulation. This chain is Sporulation-specific protein 6 (spo6), found in Schizosaccharomyces pombe (strain 972 / ATCC 24843) (Fission yeast).